A 346-amino-acid polypeptide reads, in one-letter code: Heparan sulfate glucosamine 3-O-sulfotransferase 5 (346 aa).

Residues 1–12 (MLFKQQVWLRQK) are Cytoplasmic-facing. A helical; Signal-anchor for type II membrane protein transmembrane segment spans residues 13–32 (LLVLGSLAVGSLLYLVARVG). Residues 33 to 346 (SLDRLQPICP…QITGRTLNWP (314 aa)) are Lumenal-facing. Asn-75 carries an N-linked (GlcNAc...) asparagine glycan. 100–104 (KGGTR) is a 3'-phosphoadenylyl sulfate binding site. Residues 122-128 (EIHFFDN) and 155-158 (KSPA) contribute to the substrate site. N-linked (GlcNAc...) asparagine glycosylation occurs at Asn-173. 2 residues coordinate 3'-phosphoadenylyl sulfate: Arg-183 and Ser-191. Asn-204 is a glycosylation site (N-linked (GlcNAc...) asparagine). 226–227 (YK) is a substrate binding site. An N-linked (GlcNAc...) asparagine glycan is attached at Asn-287. Tyr-293 serves as a coordination point for 3'-phosphoadenylyl sulfate. Cys-294 and Cys-304 are oxidised to a cystine. 309–313 (KGRIH) is a 3'-phosphoadenylyl sulfate binding site.

This sequence belongs to the sulfotransferase 1 family.

The protein resides in the golgi apparatus membrane. It carries out the reaction alpha-D-glucosaminyl-[heparan sulfate](n) + 3'-phosphoadenylyl sulfate = 3-sulfo-alpha-D-glucosaminyl-[heparan sulfate](n) + adenosine 3',5'-bisphosphate + H(+). Its function is as follows. Sulfotransferase that utilizes 3'-phospho-5'-adenylyl sulfate (PAPS) to catalyze the transfer of a sulfo group to position 3 of glucosamine residues in heparan. Catalyzes the rate limiting step in the biosynthesis of heparan sulfate (HSact). This modification is a crucial step in the biosynthesis of anticoagulant heparan sulfate as it completes the structure of the antithrombin pentasaccharide binding site. Also generates GlcUA-GlcNS or IdoUA-GlcNS and IdoUA2S-GlcNH2. In Mus musculus (Mouse), this protein is Heparan sulfate glucosamine 3-O-sulfotransferase 5 (Hs3st5).